The following is a 321-amino-acid chain: Annexin B10 (321 aa).

4 Annexin repeats span residues 15-86 (FDAS…GLMM), 87-158 (PPVE…LIVT), 171-243 (GQAK…AIVE), and 247-319 (SPAA…ALLG).

This sequence belongs to the annexin family.

The sequence is that of Annexin B10 (AnxB10) from Drosophila melanogaster (Fruit fly).